We begin with the raw amino-acid sequence, 244 residues long: GTP cyclohydrolase 1 type 2 homolog (244 aa).

The a divalent metal cation site is built by H65, H66, D102, H216, and E220.

This sequence belongs to the GTP cyclohydrolase I type 2/NIF3 family. As to quaternary structure, homohexamer; trimer of dimers, that forms a hollow cage-like architecture.

In terms of biological role, DNA-binding protein exhibiting the ability to bind to both single-stranded and double-stranded DNA. In Methanocaldococcus jannaschii (strain ATCC 43067 / DSM 2661 / JAL-1 / JCM 10045 / NBRC 100440) (Methanococcus jannaschii), this protein is GTP cyclohydrolase 1 type 2 homolog.